A 735-amino-acid chain; its full sequence is Disintegrin and metalloproteinase domain-containing protein 2 (735 aa).

An N-terminal signal peptide occupies residues 1 to 16 (MWRVLFLLSGLGGLRM). The propeptide occupies 17 to 174 (DSNFDSLPVQ…FKLQSVEPQQ (158 aa)). N-linked (GlcNAc...) asparagine glycans are attached at residues asparagine 122 and asparagine 220. Topologically, residues 175–686 (DFAKYIEMHV…ENIYHSKPMR (512 aa)) are extracellular. Residues 178–375 (KYIEMHVIVE…QKSQCLHNQP (198 aa)) form the Peptidase M12B domain. Disulfide bonds link cysteine 287–cysteine 370, cysteine 329–cysteine 354, cysteine 331–cysteine 336, and cysteine 445–cysteine 465. N-linked (GlcNAc...) asparagine glycosylation is found at asparagine 353, asparagine 459, and asparagine 566. The region spanning 384 to 473 (QAVCGNAKLE…SCPENHYVQT (90 aa)) is the Disintegrin domain. One can recognise an EGF-like domain in the interval 612 to 645 (LGYDCTTDKCNDRGVCNNKKHCHCSASYLPPDCS). 3 disulfides stabilise this stretch: cysteine 616–cysteine 627, cysteine 621–cysteine 633, and cysteine 635–cysteine 644. Residues 687–707 (WPFFLFIPFFIIFCVLIAIMV) traverse the membrane as a helical segment. The Cytoplasmic portion of the chain corresponds to 708–735 (KVNFQRKKWRTEDYSSDEQPESESEPKG). The residue at position 729 (serine 729) is a Phosphoserine.

In terms of processing, the prodomain and the metalloprotease domain are cleaved during the epididymal maturation of the spermatozoa. As to expression, expressed specifically in spermatogenic cells in the seminiferous cells. Not detected in fetal tissues.

Its subcellular location is the membrane. Sperm surface membrane protein that may be involved in sperm-egg plasma membrane adhesion and fusion during fertilization. Could have a direct role in sperm-zona binding or migration of sperm from the uterus into the oviduct. Interactions with egg membrane could be mediated via binding between its disintegrin-like domain to one or more integrins receptors on the egg. This is a non catalytic metalloprotease-like protein. The chain is Disintegrin and metalloproteinase domain-containing protein 2 (ADAM2) from Homo sapiens (Human).